The sequence spans 193 residues: Ion-translocating oxidoreductase complex subunit A (193 aa).

6 helical membrane passes run 5-25 (ILLIISTALINNFVLVKFLGL), 39-59 (IGMGLATMFVLTVASLCAYLV), 72-92 (LRTLIFILVIAVVVQFTEMVI), 102-122 (LLGIFLPLITTNCAVLGVALL), 134-154 (VIYGFSASLGFSLVLVLFAAL), and 171-191 (SIALITAGLMSLAFMGFSGLV).

The protein belongs to the NqrDE/RnfAE family. In terms of assembly, the complex is composed of six subunits: RnfA, RnfB, RnfC, RnfD, RnfE and RnfG.

The protein localises to the cell inner membrane. Part of a membrane-bound complex that couples electron transfer with translocation of ions across the membrane. The polypeptide is Ion-translocating oxidoreductase complex subunit A (Histophilus somni (strain 129Pt) (Haemophilus somnus)).